The following is a 158-amino-acid chain: MQGRSSAWLVKHELVHRSLGFDYQGVETLQIKPEDWYSIAVISYVYGYNYLRSQCAYDVAPGGLLASVYHLTRIQYGVDQPEEVCIKVFVPRSNPRIPSVFWIWKSADFQERESYDMLGISYDNHPRMKRILMPESWIGWPLRKDYIAPNFYELQDAY.

It belongs to the complex I 30 kDa subunit family. As to quaternary structure, NDH is composed of at least 16 different subunits, 5 of which are encoded in the nucleus.

Its subcellular location is the plastid. It localises to the chloroplast thylakoid membrane. The enzyme catalyses a plastoquinone + NADH + (n+1) H(+)(in) = a plastoquinol + NAD(+) + n H(+)(out). It catalyses the reaction a plastoquinone + NADPH + (n+1) H(+)(in) = a plastoquinol + NADP(+) + n H(+)(out). NDH shuttles electrons from NAD(P)H:plastoquinone, via FMN and iron-sulfur (Fe-S) centers, to quinones in the photosynthetic chain and possibly in a chloroplast respiratory chain. The immediate electron acceptor for the enzyme in this species is believed to be plastoquinone. Couples the redox reaction to proton translocation, and thus conserves the redox energy in a proton gradient. The polypeptide is NAD(P)H-quinone oxidoreductase subunit J, chloroplastic (Nymphaea alba (White water-lily)).